Here is a 479-residue protein sequence, read N- to C-terminus: V-type ATP synthase beta chain (479 aa).

Residues 458-479 (EGDSEREAPKMDSPHEEISEKS) form a disordered region.

This sequence belongs to the ATPase alpha/beta chains family.

Its function is as follows. Produces ATP from ADP in the presence of a proton gradient across the membrane. The V-type beta chain is a regulatory subunit. This Nitrosococcus oceani (strain ATCC 19707 / BCRC 17464 / JCM 30415 / NCIMB 11848 / C-107) protein is V-type ATP synthase beta chain.